The sequence spans 456 residues: Gustatory receptor for sugar taste 64a (456 aa).

Positions 1 to 30 (MKGPNLNFRKTPSKDNGVKQVESLARPETP) are disordered. Residues 1–91 (MKGPNLNFRK…RESNPRRVRF (91 aa)) lie on the Cytoplasmic side of the membrane. Residues 92–114 (AYKSIPMFVTLIFMIATSILFLS) traverse the membrane as a helical segment. Topologically, residues 115–128 (MFTHLLKIGITAKN) are extracellular. The chain crosses the membrane as a helical span at residues 129–150 (FVGLVFFGCVLSAYVVFIRLAK). Residue glycine 131 participates in sucrose binding. The Cytoplasmic segment spans residues 151-182 (KWPAVVRIWTRTEIPFTKPPYEIPKRNLSRRV). Residues 183–205 (QLAALAIIGLSLGEHALYQVSAI) form a helical membrane-spanning segment. Sucrose contacts are provided by glutamate 196, histidine 197, and tyrosine 234. 5 residues coordinate D-maltose: glutamate 196, histidine 197, tyrosine 234, asparagine 253, and threonine 257. Residues 206–245 (LSYTRRIQMCANITTVPSFNNYMQTNYDYVFQLLPYSPII) are Extracellular-facing. A helical transmembrane segment spans residues 246 to 271 (AVLILLINGACTFVWNYMDLFIMMIS). Sucrose is bound at residue threonine 257. Residues 272-318 (KGLSYRFEQITTRIRKLEHEEVCESVFIQIREHYVKMCELLEFVDSA) lie on the Cytoplasmic side of the membrane. Residues 319 to 342 (MSSLILLSCVNNLYFVCYQLLNVF) form a helical membrane-spanning segment. At 343–350 (NKLRWPIN) the chain is on the extracellular side. Residues 351-373 (YIYFWYSLLYLIGRTAFVFLTAA) form a helical membrane-spanning segment. Tyrosine 353 contacts sucrose. A D-maltose-binding site is contributed by tyrosine 353. At 374–421 (DINEESKRGLGVLRRVSSRSWCVEVERLIFQMTTQTVALSGKKFYFLT) the chain is on the cytoplasmic side. Residues 422 to 441 (RRLLFGMAGTIVTYELVLLQ) form a helical membrane-spanning segment. Topologically, residues 442–456 (FDEPNRRKGLQPLCA) are extracellular.

The protein belongs to the insect chemoreceptor superfamily. Gustatory receptor (GR) family. Gr5a subfamily. In terms of assembly, homotetramer. In terms of tissue distribution, expressed in Gr5a-expressing sugar-sensing cells.

Its subcellular location is the cell membrane. Its function is as follows. One of the few identified sugar gustatory receptors identified so far and which promotes the starvation-induced increase of feeding motivation. Required in combination with Gr64f to detect sucrose, maltose, and glucose. The sequence is that of Gustatory receptor for sugar taste 64a (Gr64a) from Drosophila melanogaster (Fruit fly).